The primary structure comprises 378 residues: tRNA-specific 2-thiouridylase MnmA (378 aa).

ATP is bound by residues 12-19 (GLSGGVDS) and Met38. Residues 98-100 (NPD) are interaction with target base in tRNA. Cys103 (nucleophile) is an active-site residue. Cysteines 103 and 201 form a disulfide. Residue Gly127 coordinates ATP. Residues 151–153 (KDQ) form an interaction with tRNA region. The active-site Cysteine persulfide intermediate is the Cys201. The segment at 319–320 (RY) is interaction with tRNA.

The protein belongs to the MnmA/TRMU family.

Its subcellular location is the cytoplasm. It catalyses the reaction S-sulfanyl-L-cysteinyl-[protein] + uridine(34) in tRNA + AH2 + ATP = 2-thiouridine(34) in tRNA + L-cysteinyl-[protein] + A + AMP + diphosphate + H(+). Catalyzes the 2-thiolation of uridine at the wobble position (U34) of tRNA, leading to the formation of s(2)U34. The chain is tRNA-specific 2-thiouridylase MnmA from Paracidovorax citrulli (strain AAC00-1) (Acidovorax citrulli).